A 465-amino-acid polypeptide reads, in one-letter code: Ribulose bisphosphate carboxylase large chain (465 aa).

Residue K4 is modified to N6,N6,N6-trimethyllysine. 2 residues coordinate substrate: N113 and T163. K165 (proton acceptor) is an active-site residue. K167 is a binding site for substrate. K191, D193, and E194 together coordinate Mg(2+). K191 is subject to N6-carboxylysine. H284 acts as the Proton acceptor in catalysis. Residues R285, H317, and S369 each coordinate substrate.

Belongs to the RuBisCO large chain family. Type I subfamily. As to quaternary structure, heterohexadecamer of 8 large chains and 8 small chains; disulfide-linked. The disulfide link is formed within the large subunit homodimers. Requires Mg(2+) as cofactor. The disulfide bond which can form in the large chain dimeric partners within the hexadecamer appears to be associated with oxidative stress and protein turnover.

The protein resides in the plastid. It is found in the chloroplast. The catalysed reaction is 2 (2R)-3-phosphoglycerate + 2 H(+) = D-ribulose 1,5-bisphosphate + CO2 + H2O. The enzyme catalyses D-ribulose 1,5-bisphosphate + O2 = 2-phosphoglycolate + (2R)-3-phosphoglycerate + 2 H(+). RuBisCO catalyzes two reactions: the carboxylation of D-ribulose 1,5-bisphosphate, the primary event in carbon dioxide fixation, as well as the oxidative fragmentation of the pentose substrate in the photorespiration process. Both reactions occur simultaneously and in competition at the same active site. The protein is Ribulose bisphosphate carboxylase large chain of Idesia polycarpa (Iigiri tree).